The sequence spans 535 residues: T-complex protein 1 subunit beta (535 aa).

A2 carries the post-translational modification N-acetylalanine. Position 3 is a phosphoserine (S3). K13 bears the N6-acetyllysine mark. Residue G44 coordinates ADP. ATP is bound at residue G44. S60 bears the Phosphoserine mark. D97 lines the Mg(2+) pocket. Residues G98, T99, T100, and S101 each coordinate ADP. ATP is bound by residues G98, T99, and T100. At K154 the chain carries N6-acetyllysine. ADP contacts are provided by S168 and S169. At K181 the chain carries N6-acetyllysine. Residue K248 forms a Glycyl lysine isopeptide (Lys-Gly) (interchain with G-Cter in SUMO2) linkage. Phosphoserine is present on S260. At T261 the chain carries Phosphothreonine. 3 residues coordinate ADP: G410, E495, and K500. ATP contacts are provided by E495 and K500.

Belongs to the TCP-1 chaperonin family. In terms of assembly, component of the chaperonin-containing T-complex (TRiC), a hexadecamer composed of two identical back-to-back stacked rings enclosing a protein folding chamber. Each ring is made up of eight different subunits: TCP1/CCT1, CCT2, CCT3, CCT4, CCT5, CCT6A/CCT6, CCT7, CCT8. Interacts with PACRG. Interacts with FLCN. Interacts with DLEC1. Interacts with SVEP1.

It is found in the cytoplasm. It catalyses the reaction ATP + H2O = ADP + phosphate + H(+). Its function is as follows. Component of the chaperonin-containing T-complex (TRiC), a molecular chaperone complex that assists the folding of actin, tubulin and other proteins upon ATP hydrolysis. The TRiC complex mediates the folding of WRAP53/TCAB1, thereby regulating telomere maintenance. As part of the TRiC complex may play a role in the assembly of BBSome, a complex involved in ciliogenesis regulating transports vesicles to the cilia. This Rattus norvegicus (Rat) protein is T-complex protein 1 subunit beta (Cct2).